Consider the following 735-residue polypeptide: Ribosomal RNA large subunit methyltransferase K/L (735 aa).

One can recognise a THUMP domain in the interval D45–L156.

It belongs to the methyltransferase superfamily. RlmKL family.

Its subcellular location is the cytoplasm. The catalysed reaction is guanosine(2445) in 23S rRNA + S-adenosyl-L-methionine = N(2)-methylguanosine(2445) in 23S rRNA + S-adenosyl-L-homocysteine + H(+). It catalyses the reaction guanosine(2069) in 23S rRNA + S-adenosyl-L-methionine = N(2)-methylguanosine(2069) in 23S rRNA + S-adenosyl-L-homocysteine + H(+). Specifically methylates the guanine in position 2445 (m2G2445) and the guanine in position 2069 (m7G2069) of 23S rRNA. The sequence is that of Ribosomal RNA large subunit methyltransferase K/L from Allochromatium vinosum (strain ATCC 17899 / DSM 180 / NBRC 103801 / NCIMB 10441 / D) (Chromatium vinosum).